The chain runs to 340 residues: Dihydroorotate dehydrogenase (quinone) (340 aa).

FMN contacts are provided by residues 63–67 (AGLDK) and T87. Position 67 (K67) interacts with substrate. Residue 112–116 (NRMGF) participates in substrate binding. N140 and N173 together coordinate FMN. Residue N173 coordinates substrate. S176 acts as the Nucleophile in catalysis. N178 lines the substrate pocket. Residues K218 and T246 each coordinate FMN. A substrate-binding site is contributed by 247–248 (NT). Residues G269, G298, and 319 to 320 (YT) each bind FMN.

The protein belongs to the dihydroorotate dehydrogenase family. Type 2 subfamily. Monomer. FMN is required as a cofactor.

It is found in the cell membrane. It catalyses the reaction (S)-dihydroorotate + a quinone = orotate + a quinol. The protein operates within pyrimidine metabolism; UMP biosynthesis via de novo pathway; orotate from (S)-dihydroorotate (quinone route): step 1/1. Its function is as follows. Catalyzes the conversion of dihydroorotate to orotate with quinone as electron acceptor. In Methylococcus capsulatus (strain ATCC 33009 / NCIMB 11132 / Bath), this protein is Dihydroorotate dehydrogenase (quinone).